The chain runs to 418 residues: Tyrosine--tRNA ligase (418 aa).

Tyr34 is an L-tyrosine binding site. Residues Pro39 to His48 carry the 'HIGH' region motif. L-tyrosine-binding residues include Tyr169 and Gln173. The short motif at Lys229 to Ser233 is the 'KMSKS' region element. Lys232 provides a ligand contact to ATP. Positions Leu352 to Tyr418 constitute an S4 RNA-binding domain.

This sequence belongs to the class-I aminoacyl-tRNA synthetase family. TyrS type 1 subfamily. Homodimer.

The protein resides in the cytoplasm. It carries out the reaction tRNA(Tyr) + L-tyrosine + ATP = L-tyrosyl-tRNA(Tyr) + AMP + diphosphate + H(+). Its function is as follows. Catalyzes the attachment of tyrosine to tRNA(Tyr) in a two-step reaction: tyrosine is first activated by ATP to form Tyr-AMP and then transferred to the acceptor end of tRNA(Tyr). The protein is Tyrosine--tRNA ligase of Streptococcus pyogenes serotype M6 (strain ATCC BAA-946 / MGAS10394).